The sequence spans 203 residues: Thymidylate kinase (203 aa).

14 to 21 (GGEGIGKS) serves as a coordination point for ATP.

This sequence belongs to the thymidylate kinase family.

The enzyme catalyses dTMP + ATP = dTDP + ADP. Functionally, phosphorylation of dTMP to form dTDP in both de novo and salvage pathways of dTTP synthesis. In Rickettsia conorii (strain ATCC VR-613 / Malish 7), this protein is Thymidylate kinase.